The chain runs to 105 residues: Transcriptional regulator SutA (105 aa).

Residues 1–37 (MSEEELEQDELDGADEDDGEELAAADDGEADSSDGDE) show a composition bias toward acidic residues. The disordered stretch occupies residues 1 to 105 (MSEEELEQDE…PDSKYGSRPI (105 aa)). 2 stretches are compositionally biased toward basic and acidic residues: residues 59–83 (AKQK…KVQE) and 92–105 (PPKK…SRPI).

In terms of assembly, interacts with RNA polymerase.

Its function is as follows. Causes widespread changes in gene expression, and plays a direct role in the regulation of genes encoding ribosomal components. Associates with chromosomal DNA through interaction with RNA polymerase. Contributes to biofilm formation and secondary metabolite production. Important during transitions to and from the survival state. The polypeptide is Transcriptional regulator SutA (Pseudomonas aeruginosa (strain UCBPP-PA14)).